The primary structure comprises 471 residues: Siroheme synthase 1 (471 aa).

The segment at 1–203 (MEYLPLFAQL…GDTRAAEAVL (203 aa)) is precorrin-2 dehydrogenase /sirohydrochlorin ferrochelatase. NAD(+) contacts are provided by residues 22 to 23 (EV) and 43 to 44 (KK). Residue serine 128 is modified to Phosphoserine. The interval 215-471 (GEIILVGAGP…NLRSSVVNLA (257 aa)) is uroporphyrinogen-III C-methyltransferase. Proline 224 provides a ligand contact to S-adenosyl-L-methionine. The active-site Proton acceptor is the aspartate 247. Residue lysine 269 is the Proton donor of the active site. Residues 300–302 (GGD), isoleucine 305, 330–331 (TA), methionine 382, and glycine 411 contribute to the S-adenosyl-L-methionine site.

In the N-terminal section; belongs to the precorrin-2 dehydrogenase / sirohydrochlorin ferrochelatase family. The protein in the C-terminal section; belongs to the precorrin methyltransferase family.

It catalyses the reaction uroporphyrinogen III + 2 S-adenosyl-L-methionine = precorrin-2 + 2 S-adenosyl-L-homocysteine + H(+). The enzyme catalyses precorrin-2 + NAD(+) = sirohydrochlorin + NADH + 2 H(+). The catalysed reaction is siroheme + 2 H(+) = sirohydrochlorin + Fe(2+). It functions in the pathway cofactor biosynthesis; adenosylcobalamin biosynthesis; precorrin-2 from uroporphyrinogen III: step 1/1. Its pathway is cofactor biosynthesis; adenosylcobalamin biosynthesis; sirohydrochlorin from precorrin-2: step 1/1. It participates in porphyrin-containing compound metabolism; siroheme biosynthesis; precorrin-2 from uroporphyrinogen III: step 1/1. The protein operates within porphyrin-containing compound metabolism; siroheme biosynthesis; siroheme from sirohydrochlorin: step 1/1. It functions in the pathway porphyrin-containing compound metabolism; siroheme biosynthesis; sirohydrochlorin from precorrin-2: step 1/1. Functionally, multifunctional enzyme that catalyzes the SAM-dependent methylations of uroporphyrinogen III at position C-2 and C-7 to form precorrin-2 via precorrin-1. Then it catalyzes the NAD-dependent ring dehydrogenation of precorrin-2 to yield sirohydrochlorin. Finally, it catalyzes the ferrochelation of sirohydrochlorin to yield siroheme. In Cronobacter sakazakii (strain ATCC BAA-894) (Enterobacter sakazakii), this protein is Siroheme synthase 1.